The chain runs to 211 residues: Pyridoxine/pyridoxamine 5'-phosphate oxidase (211 aa).

Substrate-binding positions include 7 to 10 (RREY) and Lys65. Residues 60–65 (RIVLLK), 75–76 (YT), Arg81, Lys82, and Gln104 each bind FMN. Positions 122, 126, and 130 each coordinate substrate. FMN is bound by residues 139-140 (QS) and Trp184. 190–192 (RLH) is a substrate binding site. FMN is bound at residue Arg194.

It belongs to the pyridoxamine 5'-phosphate oxidase family. As to quaternary structure, homodimer. It depends on FMN as a cofactor.

It carries out the reaction pyridoxamine 5'-phosphate + O2 + H2O = pyridoxal 5'-phosphate + H2O2 + NH4(+). It catalyses the reaction pyridoxine 5'-phosphate + O2 = pyridoxal 5'-phosphate + H2O2. It functions in the pathway cofactor metabolism; pyridoxal 5'-phosphate salvage; pyridoxal 5'-phosphate from pyridoxamine 5'-phosphate: step 1/1. The protein operates within cofactor metabolism; pyridoxal 5'-phosphate salvage; pyridoxal 5'-phosphate from pyridoxine 5'-phosphate: step 1/1. Catalyzes the oxidation of either pyridoxine 5'-phosphate (PNP) or pyridoxamine 5'-phosphate (PMP) into pyridoxal 5'-phosphate (PLP). The polypeptide is Pyridoxine/pyridoxamine 5'-phosphate oxidase (Vibrio atlanticus (strain LGP32) (Vibrio splendidus (strain Mel32))).